A 541-amino-acid chain; its full sequence is Glucose-6-phosphate isomerase (541 aa).

The active-site Proton donor is the Glu346. Residues His377 and Lys506 contribute to the active site.

This sequence belongs to the GPI family.

It localises to the cytoplasm. The enzyme catalyses alpha-D-glucose 6-phosphate = beta-D-fructose 6-phosphate. The protein operates within carbohydrate biosynthesis; gluconeogenesis. It functions in the pathway carbohydrate degradation; glycolysis; D-glyceraldehyde 3-phosphate and glycerone phosphate from D-glucose: step 2/4. Its function is as follows. Catalyzes the reversible isomerization of glucose-6-phosphate to fructose-6-phosphate. The protein is Glucose-6-phosphate isomerase of Rhizobium leguminosarum bv. trifolii (strain WSM2304).